The chain runs to 333 residues: Pro-cathepsin H (333 aa).

Positions 1–20 (MWAALPLLCAGAWLLSTGAT) are cleaved as a signal peptide. Positions 21 to 95 (AELTVNAIEK…AEIKHKFLWS (75 aa)) are cleaved as a propeptide — activation peptide. N-linked (GlcNAc...) asparagine glycans are attached at residues asparagine 70 and asparagine 99. 4 cysteine pairs are disulfide-bonded: cysteine 100–cysteine 325, cysteine 136–cysteine 179, cysteine 170–cysteine 212, and cysteine 270–cysteine 320. Positions 104–113 (KSNYLRGTGP) are excised as a propeptide. Residue cysteine 139 is part of the active site. A glycan (N-linked (GlcNAc...) asparagine) is linked at asparagine 228. Residues histidine 279 and asparagine 299 contribute to the active site.

Belongs to the peptidase C1 family. In terms of assembly, composed of a mini chain and a large chain. The large chain may be split into heavy and light chain. All chains are held together by disulfide bonds. Widely expressed with highest expression found in non-skeletal tissues. Low levels found in skeletal tissue.

It localises to the lysosome. The catalysed reaction is Hydrolysis of proteins, acting as an aminopeptidase (notably, cleaving Arg-|-Xaa bonds) as well as an endopeptidase.. In terms of biological role, important for the overall degradation of proteins in lysosomes. The polypeptide is Pro-cathepsin H (Ctsh) (Mus musculus (Mouse)).